The primary structure comprises 2278 residues: Protein Ycf2 (2278 aa).

The protein belongs to the Ycf2 family.

The protein localises to the plastid. It localises to the chloroplast stroma. Its subcellular location is the chromoplast stroma. In terms of biological role, probable ATPase of unknown function. Its presence in a non-photosynthetic plant (Epifagus virginiana) and experiments in tobacco indicate that it has an essential function which is probably not related to photosynthesis. This Solanum lycopersicum (Tomato) protein is Protein Ycf2 (ycf2-A).